Consider the following 156-residue polypeptide: Ribosomal RNA large subunit methyltransferase H (156 aa).

S-adenosyl-L-methionine-binding positions include Leu-73, Gly-104, and 123 to 128 (LSPLTL).

This sequence belongs to the RNA methyltransferase RlmH family. In terms of assembly, homodimer.

The protein localises to the cytoplasm. It catalyses the reaction pseudouridine(1915) in 23S rRNA + S-adenosyl-L-methionine = N(3)-methylpseudouridine(1915) in 23S rRNA + S-adenosyl-L-homocysteine + H(+). In terms of biological role, specifically methylates the pseudouridine at position 1915 (m3Psi1915) in 23S rRNA. The protein is Ribosomal RNA large subunit methyltransferase H of Marinobacter nauticus (strain ATCC 700491 / DSM 11845 / VT8) (Marinobacter aquaeolei).